The chain runs to 275 residues: Formamidopyrimidine-DNA glycosylase (275 aa).

Catalysis depends on Pro-2, which acts as the Schiff-base intermediate with DNA. Glu-3 functions as the Proton donor in the catalytic mechanism. Lys-59 serves as the catalytic Proton donor; for beta-elimination activity. DNA-binding residues include His-93, Arg-112, and Arg-153. The segment at Asn-238–Val-272 adopts an FPG-type zinc-finger fold. Catalysis depends on Arg-262, which acts as the Proton donor; for delta-elimination activity.

Belongs to the FPG family. Monomer. It depends on Zn(2+) as a cofactor.

The catalysed reaction is Hydrolysis of DNA containing ring-opened 7-methylguanine residues, releasing 2,6-diamino-4-hydroxy-5-(N-methyl)formamidopyrimidine.. It carries out the reaction 2'-deoxyribonucleotide-(2'-deoxyribose 5'-phosphate)-2'-deoxyribonucleotide-DNA = a 3'-end 2'-deoxyribonucleotide-(2,3-dehydro-2,3-deoxyribose 5'-phosphate)-DNA + a 5'-end 5'-phospho-2'-deoxyribonucleoside-DNA + H(+). Functionally, involved in base excision repair of DNA damaged by oxidation or by mutagenic agents. Acts as a DNA glycosylase that recognizes and removes damaged bases. Has a preference for oxidized purines, such as 7,8-dihydro-8-oxoguanine (8-oxoG). Has AP (apurinic/apyrimidinic) lyase activity and introduces nicks in the DNA strand. Cleaves the DNA backbone by beta-delta elimination to generate a single-strand break at the site of the removed base with both 3'- and 5'-phosphates. The protein is Formamidopyrimidine-DNA glycosylase of Chloroflexus aggregans (strain MD-66 / DSM 9485).